We begin with the raw amino-acid sequence, 42 residues long: Cytochrome b6-f complex subunit 7 (42 aa).

The helical transmembrane segment at 19–37 (AVVCFSMTLFGLSLGFGLL) threads the bilayer.

The protein belongs to the PetM family. As to quaternary structure, the 4 large subunits of the cytochrome b6-f complex are cytochrome b6, subunit IV (17 kDa polypeptide, PetD), cytochrome f and the Rieske protein, while the 4 small subunits are PetG, PetL, PetM and PetN. The complex functions as a dimer.

It is found in the plastid. The protein localises to the chloroplast thylakoid membrane. In terms of biological role, component of the cytochrome b6-f complex, which mediates electron transfer between photosystem II (PSII) and photosystem I (PSI), cyclic electron flow around PSI, and state transitions. This chain is Cytochrome b6-f complex subunit 7, found in Phaeodactylum tricornutum (strain CCAP 1055/1).